Reading from the N-terminus, the 239-residue chain is Zwei Ig domain protein zig-7 (239 aa).

Positions 1–21 (MKLINCISIALLCTLVDFSSA) are cleaved as a signal peptide. N-linked (GlcNAc...) asparagine glycosylation occurs at Asn43. The region spanning 145 to 211 (PHVIGAERRG…TEDHIGKYRC (67 aa)) is the Ig-like C2-type domain. A disulfide bond links Cys164 and Cys211.

As to expression, expressed in body wall muscles.

Its subcellular location is the secreted. Functionally, probably not involved in maintaining the position of ASI and ASH head neuron cell bodies and ventral nerve cord axons of PVQ, PVP, RMEV, AVK and HSN neurons. This is Zwei Ig domain protein zig-7 from Caenorhabditis elegans.